The following is a 138-amino-acid chain: Small ribosomal subunit protein uS9 (138 aa).

Positions 99 to 138 (DPDNRPPLKTEGYLTRDPRAKERKKYGLHKARKAPQYSKR) are disordered. A compositionally biased stretch (basic and acidic residues) spans 100–118 (PDNRPPLKTEGYLTRDPRA). Positions 119-138 (KERKKYGLHKARKAPQYSKR) are enriched in basic residues.

This sequence belongs to the universal ribosomal protein uS9 family.

The protein is Small ribosomal subunit protein uS9 of Nostoc punctiforme (strain ATCC 29133 / PCC 73102).